A 309-amino-acid polypeptide reads, in one-letter code: Thiamine-monophosphate kinase (309 aa).

The Mg(2+) site is built by aspartate 25, threonine 39, serine 40, and aspartate 41. A substrate-binding site is contributed by aspartate 48. Residues aspartate 69 and aspartate 117 each coordinate Mg(2+). ATP-binding positions include glycine 116–aspartate 117 and arginine 140. Position 201 (aspartate 201) interacts with Mg(2+). Position 203 (serine 203) interacts with ATP. Residue aspartate 204 coordinates Mg(2+). Substrate-binding residues include glutamate 250 and tryptophan 298.

The protein belongs to the thiamine-monophosphate kinase family.

It carries out the reaction thiamine phosphate + ATP = thiamine diphosphate + ADP. The protein operates within cofactor biosynthesis; thiamine diphosphate biosynthesis; thiamine diphosphate from thiamine phosphate: step 1/1. Its function is as follows. Catalyzes the ATP-dependent phosphorylation of thiamine-monophosphate (TMP) to form thiamine-pyrophosphate (TPP), the active form of vitamin B1. This chain is Thiamine-monophosphate kinase, found in Pyrococcus horikoshii (strain ATCC 700860 / DSM 12428 / JCM 9974 / NBRC 100139 / OT-3).